Consider the following 296-residue polypeptide: Ribosomal RNA small subunit methyltransferase A (296 aa).

Residues Asn-30, Leu-32, Gly-57, Glu-78, Asp-103, and Asn-128 each coordinate S-adenosyl-L-methionine.

Belongs to the class I-like SAM-binding methyltransferase superfamily. rRNA adenine N(6)-methyltransferase family. RsmA subfamily.

Its subcellular location is the cytoplasm. The catalysed reaction is adenosine(1518)/adenosine(1519) in 16S rRNA + 4 S-adenosyl-L-methionine = N(6)-dimethyladenosine(1518)/N(6)-dimethyladenosine(1519) in 16S rRNA + 4 S-adenosyl-L-homocysteine + 4 H(+). Specifically dimethylates two adjacent adenosines (A1518 and A1519) in the loop of a conserved hairpin near the 3'-end of 16S rRNA in the 30S particle. May play a critical role in biogenesis of 30S subunits. In Staphylococcus haemolyticus (strain JCSC1435), this protein is Ribosomal RNA small subunit methyltransferase A.